A 647-amino-acid polypeptide reads, in one-letter code: Dihydrolipoyllysine-residue acetyltransferase component of pyruvate dehydrogenase complex (647 aa).

A mitochondrion-targeting transit peptide spans 1–86 (MWRVCARRAQ…LWGSPSRRWY (86 aa)). The Lipoyl-binding 1 domain occupies 91–167 (HQKVPLPSLS…PVGAIICITV (77 aa)). At serine 100 the chain carries Phosphoserine. Lysine 132 carries the post-translational modification N6-lipoyllysine. Residues 184–216 (SAAPAPPAAPAPTPAAPAPSPTPSAQAPGSSYP) form a disordered region. The segment covering 187-205 (PAPPAAPAPTPAAPAPSPT) has biased composition (pro residues). Residues 218–294 (HMQVLLPALS…PLGTPLCIIV (77 aa)) form the Lipoyl-binding 2 domain. N6-lipoyllysine is present on lysine 259. Residues 311–352 (VTDLKPPAPPPIPSPAAPVPPAPQPVAPPPSAPRPAAPAGPK) form a disordered region. Residues 316 to 348 (PPAPPPIPSPAAPVPPAPQPVAPPPSAPRPAAP) show a composition bias toward pro residues. Residues 356–393 (FVSPLAKKLAAEKGIDLTQVKGTGPDGRIIKKDIDSFV) enclose the Peripheral subunit-binding (PSBD) domain. Arginine 461 lines the CoA pocket. N6-acetyllysine is present on lysine 466. At lysine 473 the chain carries N6-succinyllysine. Serine 475 contributes to the CoA binding site. Residue lysine 547 is modified to N6-succinyllysine. The CoA site is built by serine 566, asparagine 567, and glycine 591. Residues histidine 620 and aspartate 624 contribute to the active site.

This sequence belongs to the 2-oxoacid dehydrogenase family. Part of the pyruvate dehydrogenase complex (PDHc) that is a multi-enzyme complex composed of multiple copies of three enzymes, pyruvate dehydrogenase (subunits PDH1A and PDHB, E1 component), dihydrolipoamide acetyltransferase (DLAT, E2 component), and dihydrolipoamide dehydrogenase (DLD, E3 component) to which is added an additional protein the E3-binding protein (PDHX, E3BP). In terms of structural architecture, the E2 and E3BP components assemble into a 60meric central core with icosahedral symmetry. The central core is decorated with E1 and E3 proteins. Currently, two alternative models for the E2:E3BP stoichiometry are considered as being either 48:12 (E2(48)-E3BP(12)) or 40:20 (E2(40)-E3BP(20)). Interacts with PDK2 and PDK3. Interacts with SIRT4. Interacts with PDHB. It depends on (R)-lipoate as a cofactor. In terms of processing, delipoylated at Lys-132 and Lys-259 by SIRT4, delipoylation decreases the PHD complex activity.

The protein resides in the mitochondrion matrix. It carries out the reaction N(6)-[(R)-dihydrolipoyl]-L-lysyl-[protein] + acetyl-CoA = N(6)-[(R)-S(8)-acetyldihydrolipoyl]-L-lysyl-[protein] + CoA. As part of the pyruvate dehydrogenase complex, catalyzes the transfers of an acetyl group to a lipoic acid moiety. The pyruvate dehydrogenase complex, catalyzes the overall conversion of pyruvate to acetyl-CoA and CO(2), and thereby links cytoplasmic glycolysis and the mitochondrial tricarboxylic acid (TCA) cycle. The polypeptide is Dihydrolipoyllysine-residue acetyltransferase component of pyruvate dehydrogenase complex (Bos taurus (Bovine)).